Reading from the N-terminus, the 130-residue chain is Small ribosomal subunit protein uS8 (130 aa).

The protein belongs to the universal ribosomal protein uS8 family. In terms of assembly, part of the 30S ribosomal subunit. Contacts proteins S5 and S12.

Its function is as follows. One of the primary rRNA binding proteins, it binds directly to 16S rRNA central domain where it helps coordinate assembly of the platform of the 30S subunit. The polypeptide is Small ribosomal subunit protein uS8 (Pasteurella multocida (strain Pm70)).